Consider the following 653-residue polypeptide: Biotin biosynthesis bifunctional protein BioWF (653 aa).

Substrate is bound at residue Arg-278. 365 to 366 (GY) provides a ligand contact to pyridoxal 5'-phosphate. His-390 serves as a coordination point for substrate. Pyridoxal 5'-phosphate is bound by residues Ser-436, 461–464 (DDAH), and 492–495 (TASK). N6-(pyridoxal phosphate)lysine is present on Lys-495.

In the N-terminal section; belongs to the BioW family. This sequence in the C-terminal section; belongs to the class-II pyridoxal-phosphate-dependent aminotransferase family. BioF subfamily. Homodimer. The cofactor is Mg(2+). Requires pyridoxal 5'-phosphate as cofactor.

The catalysed reaction is heptanedioate + ATP + CoA = 6-carboxyhexanoyl-CoA + AMP + diphosphate. The enzyme catalyses 6-carboxyhexanoyl-[ACP] + L-alanine + H(+) = (8S)-8-amino-7-oxononanoate + holo-[ACP] + CO2. It participates in metabolic intermediate metabolism; pimeloyl-CoA biosynthesis; pimeloyl-CoA from pimelate: step 1/1. Its pathway is cofactor biosynthesis; biotin biosynthesis. Functionally, catalyzes both the decarboxylative condensation of pimeloyl-[acyl-carrier protein] and L-alanine to produce 8-amino-7-oxononanoate (AON), [acyl-carrier protein], and carbon dioxide, and the transformation of pimelate into pimeloyl-CoA with concomitant hydrolysis of ATP to AMP. The sequence is that of Biotin biosynthesis bifunctional protein BioWF from Cutibacterium acnes (strain DSM 16379 / KPA171202) (Propionibacterium acnes).